A 341-amino-acid polypeptide reads, in one-letter code: Homeobox protein mls-2 (341 aa).

Disordered regions lie at residues 1-78 and 139-209; these read MPTS…DSTN and SNPD…TVFS. Residues 64–78 are compositionally biased toward polar residues; sequence TTQSSPSASSEDSTN. Residues 153–166 are compositionally biased toward basic and acidic residues; that stretch reads KDEKSEGKDGETRD. The segment at residues 201-260 is a DNA-binding region (homeobox); sequence KKKTRTVFSRSQVSQLEMMFECKRYLSSQERSNLAQKLHLTETQVKIWFQNRRNKFKRQA.

This sequence belongs to the HMX homeobox family. In terms of tissue distribution, expressed in a subset of head neurons, including AIM and ASK (at protein level).

It is found in the nucleus. Functionally, transcription factor that binds to the promoter of target genes. Regulates fate specification and/or differentiation of multiple cell types arising from the embryonic mesodermal (M) lineage and the ABp(l/r)paa precursors. In the postembryonic M lineage, regulates cleavage orientation, cell proliferation and cell fate specification. Regulates hlh-1 expression to specify coelomocyte fate in the mesodermal (M) lineage. In AWC neurons, initiates expression of ceh-36, leading to the expression of terminal differentiation genes. Regulates ventral cephalic sheath (CEPsh) glia differentiation and expression of transcription factor hlh-17 in CEPsh glia. Promotes terminal differentiation and morphogenesis of the epithelial duct and pore cells. In the duct cell, cooperates with the EGF-Ras-ERK pathway in turning on the terminal differentiation gene lin-48. The sequence is that of Homeobox protein mls-2 from Caenorhabditis elegans.